The sequence spans 127 residues: Small ribosomal subunit protein uS12 (127 aa).

The residue at position 89 (aspartate 89) is a 3-methylthioaspartic acid.

This sequence belongs to the universal ribosomal protein uS12 family. In terms of assembly, part of the 30S ribosomal subunit. Contacts proteins S8 and S17. May interact with IF1 in the 30S initiation complex.

In terms of biological role, with S4 and S5 plays an important role in translational accuracy. Functionally, interacts with and stabilizes bases of the 16S rRNA that are involved in tRNA selection in the A site and with the mRNA backbone. Located at the interface of the 30S and 50S subunits, it traverses the body of the 30S subunit contacting proteins on the other side and probably holding the rRNA structure together. The combined cluster of proteins S8, S12 and S17 appears to hold together the shoulder and platform of the 30S subunit. This chain is Small ribosomal subunit protein uS12, found in Akkermansia muciniphila (strain ATCC BAA-835 / DSM 22959 / JCM 33894 / BCRC 81048 / CCUG 64013 / CIP 107961 / Muc).